We begin with the raw amino-acid sequence, 404 residues long: Imidazolonepropionase (404 aa).

Residues H73 and H75 each coordinate Fe(3+). Zn(2+) contacts are provided by H73 and H75. 4-imidazolone-5-propanoate contacts are provided by R82, Y145, and H178. An N-formimidoyl-L-glutamate-binding site is contributed by Y145. Residue H243 participates in Fe(3+) binding. A Zn(2+)-binding site is contributed by H243. Q246 is a 4-imidazolone-5-propanoate binding site. Residue D318 participates in Fe(3+) binding. D318 contributes to the Zn(2+) binding site. Residues N320 and G322 each coordinate N-formimidoyl-L-glutamate. S323 is a binding site for 4-imidazolone-5-propanoate.

The protein belongs to the metallo-dependent hydrolases superfamily. HutI family. It depends on Zn(2+) as a cofactor. Requires Fe(3+) as cofactor.

It is found in the cytoplasm. It catalyses the reaction 4-imidazolone-5-propanoate + H2O = N-formimidoyl-L-glutamate. Its pathway is amino-acid degradation; L-histidine degradation into L-glutamate; N-formimidoyl-L-glutamate from L-histidine: step 3/3. Its function is as follows. Catalyzes the hydrolytic cleavage of the carbon-nitrogen bond in imidazolone-5-propanoate to yield N-formimidoyl-L-glutamate. It is the third step in the universal histidine degradation pathway. This chain is Imidazolonepropionase, found in Bradyrhizobium sp. (strain BTAi1 / ATCC BAA-1182).